Here is a 314-residue protein sequence, read N- to C-terminus: MARRRKGRPINGVILLDKPTGISSNDALQKVKRIFFAEKAGHTGALDPLATGMLPICLGEATKFSQFLLDSDKRYRVIAKLGERTDTSDSDGEVVETRPVDVNLEKLEACIDTFRGESDQVPSMFSALKYQGKPLYEYARKGIEVPRESRKITVYEIILHRFEGDEVEMEVHCSKGTYIRTIVDDLGEMLGCGAHVTMLRRTGVAKYPYEKMVTLEQLNELLEQAHRDEVAPKELLDPLLLPMDTAVEDLPEVNLKAELTNLVQHGMPVQVLGAPEGTPIRMTSGEDKLFIGVAEVNDDGKVAPKRLVVFRDEE.

Aspartate 47 serves as the catalytic Nucleophile.

The protein belongs to the pseudouridine synthase TruB family. Type 1 subfamily.

It catalyses the reaction uridine(55) in tRNA = pseudouridine(55) in tRNA. Its function is as follows. Responsible for synthesis of pseudouridine from uracil-55 in the psi GC loop of transfer RNAs. The sequence is that of tRNA pseudouridine synthase B from Vibrio campbellii (strain ATCC BAA-1116).